The following is a 714-amino-acid chain: Forkhead box protein P2 (714 aa).

Residues 1 to 28 (MMQESATETISNSSMNQNGMSTLSSQLD) show a composition bias toward polar residues. Disordered regions lie at residues 1–45 (MMQE…SEVS) and 284–338 (KHGG…TGAS). The span at 291 to 304 (TTNNSSSTTSSTTS) shows a compositional bias: low complexity. The span at 314–323 (SIVNGQSSVL) shows a compositional bias: polar residues. A compositionally biased stretch (basic and acidic residues) spans 325-336 (ARRDSSSHEETG). The segment at 345 to 370 (GVCKWPGCESICEDFGQFLKHLNNEH) adopts a C2H2-type zinc-finger fold. The tract at residues 387-408 (VQQLEIQLSKERERLQAMMTHL) is leucine-zipper. A CTBP1-binding region spans residues 421 to 425 (PLNLV). Low complexity predominate over residues 437 to 458 (TSPQSLPQTPTTPTAPVTPITQ). The segment at 437–464 (TSPQSLPQTPTTPTAPVTPITQGPSVIT) is disordered. A DNA-binding region (fork-head) is located at residues 503 to 593 (RPPFTYATLI…SQKITGSPTL (91 aa)). Disordered stretches follow at residues 648–667 (LDHI…QPHI) and 677–714 (VIAE…EDLE). A compositionally biased stretch (acidic residues) spans 698-714 (LEDDREIEEEPLSEDLE).

In terms of assembly, forms homodimers and heterodimers with FOXP1 and FOXP4. Dimerization is required for DNA-binding. Interacts with CTBP1. Interacts with FOXP1. Interacts with TBR1. Interacts with ZMYM2.

It localises to the nucleus. Transcriptional repressor that may play a role in the specification and differentiation of lung epithelium. May also play a role in developing neural, gastrointestinal and cardiovascular tissues. Can act with CTBP1 to synergistically repress transcription but CTPBP1 is not essential. Plays a role in synapse formation by regulating SRPX2 levels. This chain is Forkhead box protein P2 (FOXP2), found in Macaca mulatta (Rhesus macaque).